A 328-amino-acid polypeptide reads, in one-letter code: D-cysteine desulfhydrase (328 aa).

N6-(pyridoxal phosphate)lysine is present on K51.

The protein belongs to the ACC deaminase/D-cysteine desulfhydrase family. As to quaternary structure, homodimer. Pyridoxal 5'-phosphate serves as cofactor.

The catalysed reaction is D-cysteine + H2O = hydrogen sulfide + pyruvate + NH4(+) + H(+). Its function is as follows. Catalyzes the alpha,beta-elimination reaction of D-cysteine and of several D-cysteine derivatives. It could be a defense mechanism against D-cysteine. The protein is D-cysteine desulfhydrase of Klebsiella pneumoniae (strain 342).